The sequence spans 375 residues: Succinyl-diaminopimelate desuccinylase (375 aa).

His-66 lines the Zn(2+) pocket. Asp-68 is an active-site residue. Position 99 (Asp-99) interacts with Zn(2+). Catalysis depends on Glu-133, which acts as the Proton acceptor. Zn(2+)-binding residues include Glu-134, Glu-162, and His-348.

It belongs to the peptidase M20A family. DapE subfamily. In terms of assembly, homodimer. Zn(2+) serves as cofactor. The cofactor is Co(2+).

It catalyses the reaction N-succinyl-(2S,6S)-2,6-diaminopimelate + H2O = (2S,6S)-2,6-diaminopimelate + succinate. The protein operates within amino-acid biosynthesis; L-lysine biosynthesis via DAP pathway; LL-2,6-diaminopimelate from (S)-tetrahydrodipicolinate (succinylase route): step 3/3. Functionally, catalyzes the hydrolysis of N-succinyl-L,L-diaminopimelic acid (SDAP), forming succinate and LL-2,6-diaminopimelate (DAP), an intermediate involved in the bacterial biosynthesis of lysine and meso-diaminopimelic acid, an essential component of bacterial cell walls. The chain is Succinyl-diaminopimelate desuccinylase from Citrobacter koseri (strain ATCC BAA-895 / CDC 4225-83 / SGSC4696).